The chain runs to 103 residues: Large ribosomal subunit protein bL21 (103 aa).

It belongs to the bacterial ribosomal protein bL21 family. As to quaternary structure, part of the 50S ribosomal subunit. Contacts protein L20.

This protein binds to 23S rRNA in the presence of protein L20. The chain is Large ribosomal subunit protein bL21 from Leptothrix cholodnii (strain ATCC 51168 / LMG 8142 / SP-6) (Leptothrix discophora (strain SP-6)).